The sequence spans 329 residues: G-protein coupled receptor 3 (329 aa).

Residues 1–43 lie on the Extracellular side of the membrane; sequence MMWGAGRSMAWFSAGSGSVNVSIDPAEEPTGPATLLPSPRAWD. An N-linked (GlcNAc...) asparagine glycan is attached at asparagine 20. The helical transmembrane segment at 44–64 threads the bilayer; the sequence is VVLCISGTLVSCENALVVAII. Over 65–73 the chain is Cytoplasmic; the sequence is VGTPAFRAP. The helical transmembrane segment at 74–94 threads the bilayer; that stretch reads MFLLVGSLAVADLLAGLGLVL. Residues 95–108 are Extracellular-facing; the sequence is HFAADFCIGSPEMS. Residues 109 to 129 form a helical membrane-spanning segment; the sequence is LVLVGVLATAFTASIGSLLAI. The Cytoplasmic segment spans residues 130 to 153; sequence TVDRYLSLYNALTYYSETTVTRTY. A helical transmembrane segment spans residues 154 to 174; it reads VMLALVWVGALGLGLVPVLAW. Over 175–192 the chain is Extracellular; sequence NCRDGLTTCGVVYPLSKN. Residues 193–213 traverse the membrane as a helical segment; the sequence is HLVVLAIVFFMVFGIMLQLYA. Topologically, residues 214–247 are cytoplasmic; it reads QICRIVCRHAQQIALQRHLLPASHYVATRKGIAT. A helical membrane pass occupies residues 248–268; that stretch reads LAVVLGAFAACWLPFTVYCLL. Residues 269 to 277 lie on the Extracellular side of the membrane; it reads GDANSPPLY. Residues 278–298 traverse the membrane as a helical segment; that stretch reads TYLTLLPATYNSMINPVIYAF. Residues 299 to 329 lie on the Cytoplasmic side of the membrane; that stretch reads RNQDVQKVLWAICCCCSTSKIPFRSRSPSDV. The S-palmitoyl cysteine moiety is linked to residue cysteine 312. Residues serine 323, serine 325, and serine 327 each carry the phosphoserine modification.

Belongs to the G-protein coupled receptor 1 family. In terms of tissue distribution, abundantly expressed in granule neurons at all development stages. Enriched in the longest tips of neurites during differentiation of hippocampal neurons.

It is found in the cell membrane. Constitutively active G-protein coupled receptor that maintains high 3'-5'-cyclic adenosine monophosphate (cAMP) levels that a plays a role in serveral processes including meiotic arrest in oocytes or neuronal development via activation of numerous intracellular signaling pathways. Acts as an essential activator of thermogenic adipocytes and drives thermogenesis via its intrinsic G(s)-coupling activity without the requirement of a ligand. Has a potential role in modulating a number of brain functions, including behavioral responses to stress, amyloid-beta peptide generation in neurons. Stimulates neurite outgrowth in cerebellar granular neurons modulated via PKA, ERK, and most strongly PI3K-mediated signaling pathways. This is G-protein coupled receptor 3 (Gpr3) from Rattus norvegicus (Rat).